Consider the following 307-residue polypeptide: Alginate lyase (307 aa).

The first 20 residues, 1–20 (MLKSGVMVASLCLFSVPSRA), serve as a signal peptide directing secretion.

Belongs to the polysaccharide lyase 7 family.

It localises to the secreted. It carries out the reaction Eliminative cleavage of alginate to give oligosaccharides with 4-deoxy-alpha-L-erythro-hex-4-enuronosyl groups at their non-reducing ends and beta-D-mannuronate at their reducing end.. Degrades alginates that contain guluronic acid. The polypeptide is Alginate lyase (alyA) (Klebsiella pneumoniae).